We begin with the raw amino-acid sequence, 636 residues long: C-terminal binding protein AN (636 aa).

Positions 1–21 (MSKIRSSATMPHRDQPSPASP) are disordered. NAD(+) contacts are provided by residues Ser-91, 147 to 148 (WL), 169 to 174 (VGRSVS), Asp-193, 231 to 237 (CALTNDT), 258 to 260 (TGS), Asp-284, and 307 to 311 (RSADY). A disordered region spans residues 341 to 489 (VSDEEVEESE…PLEVMQESSP (149 aa)). Acidic residues predominate over residues 342 to 357 (SDEEVEESEASEEEEQ). Residues 369–384 (ESTSRQQGESTLTSTE) are compositionally biased toward polar residues. The segment covering 385–395 (IVRREASELKE) has biased composition (basic and acidic residues). A compositionally biased stretch (polar residues) spans 398–409 (SPGQQHVSQNTA). Positions 417–429 (SRSGKKAKKRHSQ) are enriched in basic residues. The span at 430-445 (QKYMQKTDGSSGLNEE) shows a compositional bias: polar residues. The span at 470-480 (SPEDSRSRKTP) shows a compositional bias: basic and acidic residues.

Belongs to the D-isomer specific 2-hydroxyacid dehydrogenase family. Plant AN subfamily. As to quaternary structure, homodimer. Interacts with KCBP and SUB (via intra-cellular domain); AN is not required for the correct subcellular localization and recycling of SUB. Binds to SOKs proteins polymers (e.g. SOK1, SOK2, SOK3 and SOK4). Interacts with IPGA1 on microtubule upon mechanical stress to regulate microtubule organization. NAD(+) is required as a cofactor. In terms of tissue distribution, expressed in cotyledons, leaves, roots, stems and floral buds.

The protein localises to the cytoplasm. It localises to the golgi apparatus. The protein resides in the trans-Golgi network. Its subcellular location is the cytoskeleton. Functionally, involved in controlling the equilibrium between tubular and stacked structures in the Golgi complex. Required for cortical microtubules (MTs) arrangement that confers cell shape. Cooperatively with IPGA1, negatively regulates cortical microtubules (CMTs) organization in response to mechanical stress and modulates pavement cells morphogenesis leading to puzzle shape, probably in an AAA1/KTN1-dependent manner. Regulates the width of leaves by controlling the polar elongation of leaf cells. Involved in the regulation of trichome branching. Seems to not be able to regulate gene transcription. Regulates epidermal cell divisions and elongation in a non-cell-autonomous manner (regulated by subepidermal cells), but regulates epidermal cell polarity, shape, trichome branching and elongation in a cell-autonomous manner. Negatively regulates growth in the petiole elongation. Prevents lipid peroxidation as a result of abiotic stress response. Is involved in the SUB-dependent signaling mechanism and may act in a membrane trafficking event around the trans-Golgi network. This chain is C-terminal binding protein AN, found in Arabidopsis thaliana (Mouse-ear cress).